We begin with the raw amino-acid sequence, 149 residues long: Large ribosomal subunit protein bL9 (149 aa).

The protein belongs to the bacterial ribosomal protein bL9 family.

Binds to the 23S rRNA. The polypeptide is Large ribosomal subunit protein bL9 (Thermotoga sp. (strain RQ2)).